The following is a 77-amino-acid chain: Pi-stichotoxin-Hmg5a (77 aa).

An N-terminal signal peptide occupies residues 1–21 (MDYQRLLFLFAVAMVITTTVA). The propeptide occupies 22–34 (LPQDTALMDGQLQ). 3 cysteine pairs are disulfide-bonded: Cys-40–Cys-73, Cys-42–Cys-66, and Cys-56–Cys-74.

The protein belongs to the sea anemone type 3 (BDS) potassium channel toxin family.

The protein localises to the secreted. The protein resides in the nematocyst. Toxin that inhibits rat ASIC3 channels (IC(50)=13.8 uM). Also able to bind T.californica muscle-type nicotinic acetylcholine receptors (nAChR), and human alpha-7/CHRNA7 nicotinic acetylcholine receptors. This is Pi-stichotoxin-Hmg5a from Heteractis magnifica (Magnificent sea anemone).